The following is a 53-amino-acid chain: UPF0391 membrane protein gsr2640 (53 aa).

A run of 2 helical transmembrane segments spans residues 4–24 and 32–49; these read LLWLVVVLMVIAALLGFGGVV and WFLIVAAVVLAVVGFVTG.

This sequence belongs to the UPF0391 family.

The protein resides in the cell membrane. This chain is UPF0391 membrane protein gsr2640, found in Gloeobacter violaceus (strain ATCC 29082 / PCC 7421).